The following is a 327-amino-acid chain: Tetraacyldisaccharide 4'-kinase (327 aa).

52 to 59 lines the ATP pocket; the sequence is TAGGAGKT.

This sequence belongs to the LpxK family.

It carries out the reaction a lipid A disaccharide + ATP = a lipid IVA + ADP + H(+). It participates in glycolipid biosynthesis; lipid IV(A) biosynthesis; lipid IV(A) from (3R)-3-hydroxytetradecanoyl-[acyl-carrier-protein] and UDP-N-acetyl-alpha-D-glucosamine: step 6/6. In terms of biological role, transfers the gamma-phosphate of ATP to the 4'-position of a tetraacyldisaccharide 1-phosphate intermediate (termed DS-1-P) to form tetraacyldisaccharide 1,4'-bis-phosphate (lipid IVA). In Gluconacetobacter diazotrophicus (strain ATCC 49037 / DSM 5601 / CCUG 37298 / CIP 103539 / LMG 7603 / PAl5), this protein is Tetraacyldisaccharide 4'-kinase.